The chain runs to 247 residues: Probable transcriptional regulatory protein ABO_0750 (247 aa).

It belongs to the TACO1 family.

Its subcellular location is the cytoplasm. The sequence is that of Probable transcriptional regulatory protein ABO_0750 from Alcanivorax borkumensis (strain ATCC 700651 / DSM 11573 / NCIMB 13689 / SK2).